The sequence spans 222 residues: Glutathione S-transferase alpha M14 (222 aa).

Met-1 carries the N-acetylmethionine modification. The residue at position 2 (Ala-2) is an N-acetylalanine; in Glutathione S-transferase alpha M14, N-terminally processed. The GST N-terminal domain occupies 3-83 (GKPILHYFNG…YIATKYNLYG (81 aa)). The residue at position 4 (Lys-4) is an N6-succinyllysine. Glutathione-binding positions include Tyr-9, 54–55 (QV), and 67–68 (QT). One can recognise a GST C-terminal domain in the interval 85–208 (DAKERALIDM…QPGSQRKPPM (124 aa)). A disordered region spans residues 199-222 (QPGSQRKPPMDAKKIRRSQEYFPD). The segment covering 206–222 (PPMDAKKIRRSQEYFPD) has biased composition (basic and acidic residues).

The protein belongs to the GST superfamily. Alpha family. As to quaternary structure, homodimer or heterodimer of GSTA1 and GSTA2.

The protein resides in the cytoplasm. It carries out the reaction RX + glutathione = an S-substituted glutathione + a halide anion + H(+). It catalyses the reaction prostaglandin A2 + glutathione = prostaglandin A2-S-(R)-glutathione. The catalysed reaction is prostaglandin J2 + glutathione = prostaglandin J2-S-(R)-glutathione. The enzyme catalyses (13S)-hydroperoxy-(9Z,11E)-octadecadienoate + 2 glutathione = (13S)-hydroxy-(9Z,11E)-octadecadienoate + glutathione disulfide + H2O. It carries out the reaction androst-5-ene-3,17-dione = androst-4-ene-3,17-dione. Its function is as follows. Glutathione S-transferase that catalyzes the nucleophilic attack of the sulfur atom of glutathione on the electrophilic groups of a wide range of exogenous and endogenous compounds. Involved in the formation of glutathione conjugates of both prostaglandin A2 (PGA2) and prostaglandin J2 (PGJ2). It also catalyzes the isomerization of D5-androstene-3,17-dione (AD) into D4-androstene-3,17-dione and may therefore play an important role in hormone biosynthesis. Through its glutathione-dependent peroxidase activity toward the fatty acid hydroperoxide (13S)-hydroperoxy-(9Z,11E)-octadecadienoate/13-HPODE it is also involved in the metabolism of oxidized linoleic acid. This is Glutathione S-transferase alpha M14 from Sus scrofa (Pig).